The sequence spans 661 residues: Phospholipid:diacylglycerol acyltransferase (661 aa).

Positions 1–71 (MGTLFRRNVQ…FDRKRDGNGR (71 aa)) are disordered. Over 1-80 (MGTLFRRNVQ…RKRWRDSRRL (80 aa)) the chain is Cytoplasmic. Residues 34–48 (HIHHQQGLGHKRRRG) are compositionally biased toward basic residues. 2 short sequence motifs (bipartite nuclear localization signal) span residues 43-50 (HKRRRGIS) and 64-71 (RKRDGNGR). Over residues 54 to 70 (KRNERGKDFDRKRDGNG) the composition is skewed to basic and acidic residues. A helical transmembrane segment spans residues 81–101 (IFILGAFLGVLLPFSFGAYHV). The Lumenal segment spans residues 102 to 661 (HNSDSDLFDN…QWVSQMPFPM (560 aa)). Q162 contributes to the substrate binding site. The GHSXG lipase motif signature appears at 322–326 (GHSMG). S324 (acyl-ester intermediate) is an active-site residue. Residue M325 participates in substrate binding. N453, N461, and N469 each carry an N-linked (GlcNAc...) asparagine glycan. D567 functions as the Charge relay system in the catalytic mechanism. The N-linked (GlcNAc...) asparagine glycan is linked to N594. H618 serves as the catalytic Charge relay system.

The protein belongs to the AB hydrolase superfamily. Lipase family.

Its subcellular location is the endoplasmic reticulum membrane. The protein localises to the nucleus inner membrane. It carries out the reaction a glycerophospholipid + a 1,2-diacyl-sn-glycerol = a monoacylglycerophospholipid + a triacyl-sn-glycerol. The catalysed reaction is a 1-acyl-sn-glycerol + a 1,2-diacyl-sn-glycero-3-phosphocholine = a 1-acyl-sn-glycero-3-phosphocholine + a 1,2-diacyl-sn-glycerol. It catalyses the reaction 1,2-di-(9Z-octadecenoyl)-sn-glycero-3-phosphoethanolamine + 1,2-di-(9Z-octadecenoyl)-sn-glycerol = 1-(9Z-octadecenoyl)-sn-glycero-3-phosphoethanolamine + 1,2,3-tri-(9Z-octadecenoyl)-glycerol. The enzyme catalyses 1,2-di-(9Z-octadecenoyl)-sn-glycerol + 1,2-di-(9Z-octadecenoyl)-sn-glycero-3-phosphocholine = 1,2,3-tri-(9Z-octadecenoyl)-glycerol + 1-(9Z-octadecenoyl)-sn-glycero-3-phosphocholine. It carries out the reaction 1-(9Z-octadecenoyl)-sn-glycerol + 1,2-di-(9Z-octadecenoyl)-sn-glycero-3-phosphocholine = di-(9Z)-octadecenoylglycerol + 1-(9Z-octadecenoyl)-sn-glycero-3-phosphocholine. The catalysed reaction is 2-(9Z-octadecenoyl)-glycerol + 1,2-di-(9Z-octadecenoyl)-sn-glycero-3-phosphocholine = 1,2-di-(9Z-octadecenoyl)-glycerol + 1-(9Z-octadecenoyl)-sn-glycero-3-phosphocholine. It catalyses the reaction 1-(9Z-octadecenoyl)-2-hexadecanoyl-sn-glycero-3-phosphoethanolamine + 1,2-di-(9Z-octadecenoyl)-sn-glycerol = 1,2-di-(9Z)-octadecenoyl-3-hexadecanoyl-sn-glycerol + 1-(9Z-octadecenoyl)-sn-glycero-3-phosphoethanolamine. The enzyme catalyses 1-(9Z-octadecenoyl)-2-octadecanoyl-sn-glycero-3-phosphoethanolamine + 1,2-di-(9Z-octadecenoyl)-sn-glycerol = 1,2-di-(9Z)-octadecenoyl-3-octadecanoyl-sn-glycerol + 1-(9Z-octadecenoyl)-sn-glycero-3-phosphoethanolamine. It carries out the reaction 1-(9Z)-octadecenoyl-2-(9Z,12Z)-octadecadienoyl-sn-glycero-3-phosphoethanolamine + 1,2-di-(9Z-octadecenoyl)-sn-glycerol = 1,2-di-(9Z)-octadecenoyl-3-(9Z,12Z)-octadecadienoyl-sn-glycerol + 1-(9Z-octadecenoyl)-sn-glycero-3-phosphoethanolamine. Functionally, catalyzes triacylglycerol (TAG) formation by an acyl-CoA independent pathway. The enzyme specifically transfers acyl groups from the sn-2 position of a phospholipid to diacylglycerol (DAG), thus forming an sn-1-lysophospholipid. The preferred acyl donors are phosphatidylethanolamine (PE) and phosphatidylcholine (PC). Also capable of using broad acyl donors such as phosphatidic acid (PA), phosphatidylserine (PS), phosphatidylglycerol (PG) and phosphatidylinositol (PI), as well as monogalactosyldiacylglycerol (MGDG), digalactosyldiacylglycerol (DGDG), and acyl-CoA, and it is more likely to use unsaturated acyl donors. As acyl acceptors, it prefers 1,2- over 1,3-diacylglycerol (DAG). Additionally, has esterification activity that can utilize methanol as acyl acceptor to generate fatty acid methyl esters (FAME). Can also utilize ceramide instead of DAG, acylating the ceramides by attaching a fatty acid to the hydroxy group on the first carbon atom of the long-chain base to produce 1-O-acylceramides. Involved in lipid particle synthesis from the endoplasmic reticulum, promoting localized TAG production at discrete ER subdomains. Relocates from the endoplasmic reticulum to a subdomain of the inner nuclear membrane upon nutrient starvation, where it provides a site of TAG synthesis, which is coupled with nuclear membrane remodeling. The polypeptide is Phospholipid:diacylglycerol acyltransferase (Saccharomyces cerevisiae (strain ATCC 204508 / S288c) (Baker's yeast)).